A 353-amino-acid polypeptide reads, in one-letter code: 3-ketosteroid-9-alpha-monooxygenase, ferredoxin reductase component (353 aa).

Residues 8 to 117 form the FAD-binding FR-type domain; sequence SHVLELQVAE…LAPSGTFVPK (110 aa). The region spanning 264–353 is the 2Fe-2S ferredoxin-type domain; it reads ATAVVTLDGT…SDSVEVTYDE (90 aa). Residues C300, C305, C308, and C338 each coordinate [2Fe-2S] cluster.

In terms of assembly, monomer. The two-component system 3-ketosteroid-9-alpha-monooxygenase is composed of an oxygenase component KshA and a reductase component KshB. It depends on FAD as a cofactor. [2Fe-2S] cluster serves as cofactor.

The catalysed reaction is androsta-1,4-diene-3,17-dione + 2 reduced [2Fe-2S]-[ferredoxin] + O2 + 2 H(+) = 9alpha-hydroxyandrosta-1,4-diene-3,17-dione + 2 oxidized [2Fe-2S]-[ferredoxin] + H2O. The protein operates within lipid metabolism; steroid biosynthesis. In terms of biological role, involved in the degradation of cholesterol. Catalyzes the introduction of a 9a-hydroxyl moiety into 1,4-androstadiene-3,17-dione (ADD) to yield the 9alpha-hydroxy-1,4-androstadiene-3,17-dione (9OHADD) intermediate which spontaneously form 3-hydroxy-9,10-seconandrost-1,3,5(10)-triene-9,17-dione (HSA) via the meta-cleavage of ring B with concomitant aromatization of ring A. In Mycolicibacterium smegmatis (strain ATCC 700084 / mc(2)155) (Mycobacterium smegmatis), this protein is 3-ketosteroid-9-alpha-monooxygenase, ferredoxin reductase component (kshB).